The chain runs to 143 residues: MSRHYEVVFLVHPDQSEQVPAMIERYKSLIEGGNGTIHRLEDWGRRQLAYPIQNLVKAHYVLLNIEVDQAVLSELVESFRFNDAVLRHLVVKRDGADTEQSLIMKSKDEKGDKPERSERRRRDDEEGEAPAANDNDGDNAEAA.

The disordered stretch occupies residues 98 to 143 (TEQSLIMKSKDEKGDKPERSERRRRDDEEGEAPAANDNDGDNAEAA). Basic and acidic residues predominate over residues 105 to 124 (KSKDEKGDKPERSERRRRDD).

The protein belongs to the bacterial ribosomal protein bS6 family.

In terms of biological role, binds together with bS18 to 16S ribosomal RNA. This Xanthomonas euvesicatoria pv. vesicatoria (strain 85-10) (Xanthomonas campestris pv. vesicatoria) protein is Small ribosomal subunit protein bS6.